We begin with the raw amino-acid sequence, 325 residues long: Glutarate 2-hydroxylase (325 aa).

Fe cation is bound by residues His160, Asp162, and His292.

Belongs to the glutarate hydroxylase family. Homotetramer. Fe(2+) is required as a cofactor.

It catalyses the reaction glutarate + 2-oxoglutarate + O2 = (S)-2-hydroxyglutarate + succinate + CO2. Its pathway is amino-acid degradation. Acts as an alpha-ketoglutarate-dependent dioxygenase catalyzing hydroxylation of glutarate (GA) to L-2-hydroxyglutarate (L2HG). Functions in a L-lysine degradation pathway that proceeds via cadaverine, glutarate and L-2-hydroxyglutarate. The sequence is that of Glutarate 2-hydroxylase from Escherichia fergusonii (strain ATCC 35469 / DSM 13698 / CCUG 18766 / IAM 14443 / JCM 21226 / LMG 7866 / NBRC 102419 / NCTC 12128 / CDC 0568-73).